A 147-amino-acid chain; its full sequence is uncharacterized protein (147 aa).

Residues 44 to 147 form the HTH LytTR-type domain; that stretch reads LVGYIDKEIH…LKSIKERLSI (104 aa).

Its subcellular location is the cytoplasm. This is an uncharacterized protein from Staphylococcus aureus (strain MW2).